Consider the following 273-residue polypeptide: Sulfur carrier protein FdhD (273 aa).

The active-site Cysteine persulfide intermediate is cysteine 124. A Mo-bis(molybdopterin guanine dinucleotide)-binding site is contributed by 263 to 268; it reads FCRQSR.

This sequence belongs to the FdhD family.

Its subcellular location is the cytoplasm. Required for formate dehydrogenase (FDH) activity. Acts as a sulfur carrier protein that transfers sulfur from IscS to the molybdenum cofactor prior to its insertion into FDH. The protein is Sulfur carrier protein FdhD of Acinetobacter baylyi (strain ATCC 33305 / BD413 / ADP1).